A 393-amino-acid chain; its full sequence is uncharacterized protein (393 aa).

Residues 345 to 393 (PNKWATDDAARREMERTRKARYRAKNRAVADPEDSPPGKRLRRGPKSST) are disordered. Positions 349 to 361 (ATDDAARREMERT) are enriched in basic and acidic residues. The span at 383–393 (KRLRRGPKSST) shows a compositional bias: basic residues.

This is an uncharacterized protein from Ictalurid herpesvirus 1 (strain Auburn) (IcHV-1).